The chain runs to 289 residues: Probable signal peptidase I (289 aa).

The Cytoplasmic portion of the chain corresponds to 1 to 53 (MTETTDSVPEPPSDADQLQPKVSICGLDMPAEVSETAAEAAIGVSEPKKRSAL). A helical transmembrane segment spans residues 54-74 (WEFAILAVIAIGLYYVMLTFV). Residues 75-289 (ARPYLIPSES…VGSVNSQQGQ (215 aa)) lie on the Extracellular side of the membrane. Residues S84 and K162 contribute to the active site.

The protein belongs to the peptidase S26 family.

Its subcellular location is the cell membrane. The enzyme catalyses Cleavage of hydrophobic, N-terminal signal or leader sequences from secreted and periplasmic proteins.. This chain is Probable signal peptidase I (lepB), found in Mycobacterium leprae (strain TN).